The following is a 753-amino-acid chain: Synaptotagmin-like protein 5 (753 aa).

Residues 7-123 (FINLSFLLDH…IISGEWFLEE (117 aa)) enclose the RabBD domain. An FYVE-type zinc finger spans residues 64–106 (CVHCQKSLGLIFDRGAPCQACSLRVCSECRVTGLDGSWKCTVC). Disordered regions lie at residues 145-188 (RRSP…GFLL), 221-283 (SFKS…GFEN), and 298-359 (TKSH…LNSL). Position 147 is a phosphoserine (serine 147). Over residues 224–238 (SVSGSDRGSTTSSDL) the composition is skewed to low complexity. Polar residues-rich tracts occupy residues 260–275 (TQRS…TSIS) and 305–316 (TSGTPSIAVSGT). C2 domains follow at residues 429-550 (VTGE…DEWF) and 590-717 (PQGK…VDWM).

In terms of assembly, binds RAB27A that has been activated by GTP-binding.

Its subcellular location is the membrane. Its function is as follows. May act as Rab effector protein and play a role in vesicle trafficking. Binds phospholipids. The polypeptide is Synaptotagmin-like protein 5 (Sytl5) (Rattus norvegicus (Rat)).